A 470-amino-acid chain; its full sequence is MPSPLRQLLELMIQAVETLESVCEEKGISLPDLHAPYTPASEAFLRIPAAIEAANVITAAADHMSAIVSPPTSYLYKFLGGPCRAVAIRACLESNVSEIIREAGPSGIHVDDIAKKNGHDAQKLARFLRYLATHHIYREVSPDVFTHSRLSCFFDTYKPSAEVIANPKQKYDNTRGFAAPASHHLDITFKAAALAWETMDDPKTGHSDELTDAPFARAFPEDKTLWNLLERDAFARNRFDLTMVAVAQRQSPDSIFRAFDWERLPAGALVVEVGGGMGTSAFPLATKYPEMRLVVQDLPDVIAKAEKLWTEKMPDALSSGRVVLQGHDCFAPQPQTDAAVFLLKMILHDWSDEYCVKILRQLRAAARPDTALVIVDCLVPLACRLDDAAEAALPGAVGPQAPPPLLPNYGTVNEYVYNMDVMMHLLFNAQERTVAQFTRVLLRAGWRVCAVHRTQEGNGVFLQSVEAVPA.

S-adenosyl-L-methionine-binding positions include 274 to 275, Asp-297, 328 to 329, and Lys-344; these read GG and DC. His-348 (proton acceptor) is an active-site residue.

This sequence belongs to the class I-like SAM-binding methyltransferase superfamily. Cation-independent O-methyltransferase family. COMT subfamily.

S-adenosyl-L-methionine-dependent methyltransferase that preferentially catalyzes the methylation of 4-OH phenolic compounds like coniferyl alcohol, vanillyl alcohol and ferrulic acid. May play a role in promoting lignin degradation by methylating and inactivating free-hydroxyl phenolic compounds, products of lignin cleavage which are known inhibitors of lignin peroxidases. The polypeptide is 4-O-methyltransferase 1 (Phanerochaete chrysosporium (strain RP-78 / ATCC MYA-4764 / FGSC 9002) (White-rot fungus)).